A 444-amino-acid polypeptide reads, in one-letter code: MRRNPRPGSAASSHNHTPNFYSENSNSSHSATSGDSNGRRSAGPELGEPDGRMARGSSCGEPALSSGVPGGDTWAGSSRPKLAPRSHNGQTACGAATVRGGASEPSGSPAVLEEQLNLLPILDLRQEMPPPPVSKSFLSLFFQVLSVFLSLVADGLVCVYREICSIRFLFTAVSLLSIFLAALWWGLLYLIPPLENEPKEMLTLSQYHHRVHSQGQQLQQLQAELSKLHKEVTSVRAAHSERVAKLVFQRLNEDFVRKPDYALSSVGASIDLEKTSSDYEDRNTAYFWNRLSFWNYARPPSVILEPDVFPGNCWAFEGEQGQVVIRLPGHVQLSDITLQHPPPTVAHTGGASSAPRDFAVFGLQADDDETEVFLGKFIFEVQKSEIQTFHLQNDPPSAFPKVKIQILSNWGHPRFTCLYRVRAHGVRISESAEDNAMGVTGGPH.

Residues 1–109 (MRRNPRPGSA…GGASEPSGSP (109 aa)) form a disordered region. Over residues 19–36 (NFYSENSNSSHSATSGDS) the composition is skewed to low complexity. Helical transmembrane passes span 137–159 (FLSL…LVCV) and 166–188 (IRFL…WGLL). The stretch at 204–241 (LSQYHHRVHSQGQQLQQLQAELSKLHKEVTSVRAAHSE) forms a coiled coil. The region spanning 267-428 (GASIDLEKTS…YRVRAHGVRI (162 aa)) is the SUN domain.

Self-associates. Interacts with ODF1. May associate with microtubules. Interacts with SUN3 and SYNE1; suggesting the formation of a LINC complexs; a SUN domain-based heterotrimer of SPAG4 and SUN3 may associate with SYNE1. Interacts with SEPT12 and LMNB1; during spermatogenesis. Testis specific. Exclusively expressed in spermatids.

Its subcellular location is the membrane. The protein resides in the cytoplasm. It is found in the cytoskeleton. It localises to the flagellum axoneme. The protein localises to the nucleus envelope. Its subcellular location is the nucleus inner membrane. Its function is as follows. Involved in spermatogenesis. Required for sperm head formation but not required to establish and maintain general polarity of the sperm head. Required for anchoring and organization of the manchette. Required for targeting of SUN3 and probably SYNE1 through a probable SUN1:SYNE3 LINC complex to the nuclear envelope and involved in accurate posterior sperm head localization of the complex. May anchor SUN3 the nuclear envelope. Involved in maintenance of the nuclear envelope integrity. May assist the organization and assembly of outer dense fibers (ODFs), a specific structure of the sperm tail. In Rattus norvegicus (Rat), this protein is Sperm-associated antigen 4 protein (Spag4).